The primary structure comprises 210 residues: Large ribosomal subunit protein uL3 (210 aa).

The segment at Gly-121–Gly-150 is disordered.

It belongs to the universal ribosomal protein uL3 family. As to quaternary structure, part of the 50S ribosomal subunit. Forms a cluster with proteins L14 and L19.

In terms of biological role, one of the primary rRNA binding proteins, it binds directly near the 3'-end of the 23S rRNA, where it nucleates assembly of the 50S subunit. This chain is Large ribosomal subunit protein uL3, found in Pelotomaculum thermopropionicum (strain DSM 13744 / JCM 10971 / SI).